A 462-amino-acid polypeptide reads, in one-letter code: MSEINNENLEPTSSTVAESTESKNKHIRSALRKRRGKLSAQTYEEDQEAILSSPLLTSTPKTVSRSLVRLYPYLIVVDNFLSIITWSNDNVSANLLGIFLFTVCVLYFGFITRYFGHLMIVGIIWVYLLIDKHVQETMASCPSLDDIIHVMDRVSMKSSAVLSPITILSAQDVRRLLFTIAFLSPVYIFLTVFVLSPNYLMLIGGLYVLTYHSKLIRRMRRYLWKFRVVRLLVFFITGLDLGGPDNNRRLFASVNKKIRSFVWNEVGNTSNTKKTVLFKVALFENQRRWLGIGWTSTMLSYERASWTDEFLNTSPSPEVFTLPEEQSGMAWEWHDKDWMLDLTNDGIIQLPASAAKTKVKPGADEGFIYYDNTWNNPSATDTYKKYTRRRRWIRTATVTTTYDDEPTVEKATPNSHALKSEENNRVRKRKVSFSTANEVHIIPSSDSSKLIQISDVSMSPSL.

Residues 1–19 (MSEINNENLEPTSSTVAES) show a composition bias toward polar residues. The tract at residues 1–26 (MSEINNENLEPTSSTVAESTESKNKH) is disordered. Residues 1–90 (MSEINNENLE…LSIITWSNDN (90 aa)) lie on the Cytoplasmic side of the membrane. The helical transmembrane segment at 91-111 (VSANLLGIFLFTVCVLYFGFI) threads the bilayer. The Peroxisomal segment spans residues 112 to 175 (TRYFGHLMIV…TILSAQDVRR (64 aa)). Residues 176 to 196 (LLFTIAFLSPVYIFLTVFVLS) form a helical membrane-spanning segment. Residues 197 to 462 (PNYLMLIGGL…ISDVSMSPSL (266 aa)) are Cytoplasmic-facing. The disordered stretch occupies residues 406–425 (PTVEKATPNSHALKSEENNR). Phosphoserine is present on serine 432. Threonine 435 is modified (phosphothreonine).

Belongs to the PEX28-32 family. PEX30/31 subfamily.

It is found in the peroxisome membrane. This is Peroxisomal membrane protein PEX31 (PEX31) from Saccharomyces cerevisiae (strain ATCC 204508 / S288c) (Baker's yeast).